Consider the following 575-residue polypeptide: Thrombomodulin (575 aa).

An N-terminal signal peptide occupies residues 1–18 (MLGVLVLGALALAGLGFP). The Extracellular portion of the chain corresponds to 19–515 (APAEPQPGGS…TPPAVGLVHS (497 aa)). The region spanning 31-169 (VEHDCFALYP…VKADGFLCEF (139 aa)) is the C-type lectin domain. Asn47, Asn115, and Asn116 each carry an N-linked (GlcNAc...) asparagine glycan. 19 cysteine pairs are disulfide-bonded: Cys137/Cys158, Cys245/Cys256, Cys252/Cys265, Cys267/Cys280, Cys288/Cys296, Cys292/Cys308, Cys310/Cys323, Cys329/Cys340, Cys336/Cys349, Cys351/Cys362, Cys369/Cys378, Cys374/Cys388, Cys390/Cys404, Cys408/Cys413, Cys417/Cys425, Cys427/Cys439, Cys445/Cys455, Cys451/Cys464, and Cys466/Cys480. 2 EGF-like domains span residues 241–281 (GAWD…RSCT) and 284–324 (ATQS…HRCE). One can recognise an EGF-like 3; calcium-binding domain in the interval 325 to 363 (DVDDCILEPSPCPQRCVNTQGGFECHCYPNYDLVDGECV). Asn342 carries the post-translational modification (3R)-3-hydroxyasparagine. EGF-like domains lie at 365–405 (PVDP…HRCQ) and 404–440 (CQMF…FICT). Asn382 carries N-linked (GlcNAc...) asparagine glycosylation. Asn409 carries an N-linked (GlcNAc...) asparagine glycan. Residues 441–481 (DIDECENGGFCSGVCHNLPGTFECICGPDSALARHIGTDCD) enclose the EGF-like 6; calcium-binding domain. An involved in alpha-L/beta-2 and alpha-M/beta-2 integrin binding region spans residues 481-515 (DSGKVDGGDSGSGEPPPSPTPGSTLTPPAVGLVHS). A disordered region spans residues 484-506 (KVDGGDSGSGEPPPSPTPGSTLT). Ser490 and Ser492 each carry an O-linked (Xyl...) (chondroitin sulfate) serine glycan. The chain crosses the membrane as a helical span at residues 516–539 (GLLIGISIASLCLVVALLALLCHL). Topologically, residues 540–575 (RKKQGAARAKMEYKCAAPSKEVVLQHVRTERTPQRL) are cytoplasmic.

As to quaternary structure, interacts with ITGAL, ITGAM and ITGB2. Interacts with thrombin/F2; this interaction switches the specificity of thrombin from a procoagulant to an anticoagulant and antifibrinolytic protease. Interacts with ANGP1 and ANGP2; these interactions significantly inhibit the generation of activated PC and TAFIa/CPB2 by the thrombin/thrombomodulin complex. Interacts with PF4; this interaction enhances generation of activated protein C. Interacts with HMGB1; this interaction inhibits HMGB1 inflammatory activity. In terms of processing, N-glycosylated. The iron and 2-oxoglutarate dependent 3-hydroxylation of aspartate and asparagine is (R) stereospecific within EGF domains. Endothelial cells are unique in synthesizing thrombomodulin.

It is found in the membrane. Functionally, endothelial cell receptor that plays a critical role in regulating several physiological processes including hemostasis, coagulation, fibrinolysis, inflammation, and angiogenesis. Acts as a cofactor for thrombin activation of protein C/PROC on the surface of vascular endothelial cells leading to initiation of the activated protein C anticoagulant pathway. Also accelerates the activation of the plasma carboxypeptidase B2/CPB2, which catalyzes removal of C-terminal basic amino acids from its substrates including kinins or anaphylatoxins leading to fibrinolysis inhibition. Plays critical protective roles in changing the cleavage specificity of protease-activated receptor 1/PAR1, inhibiting endothelial cell permeability and inflammation. Suppresses inflammation distinctly from its anticoagulant cofactor activity by sequestering HMGB1 thereby preventing it from engaging cellular receptors such as RAGE and contributing to the inflammatory response. In Homo sapiens (Human), this protein is Thrombomodulin (THBD).